We begin with the raw amino-acid sequence, 425 residues long: UDP-N-acetylglucosamine 1-carboxyvinyltransferase (425 aa).

22-23 (KN) is a phosphoenolpyruvate binding site. Arg93 is a UDP-N-acetyl-alpha-D-glucosamine binding site. Asp117 acts as the Proton donor in catalysis. Positions 312 and 334 each coordinate UDP-N-acetyl-alpha-D-glucosamine.

Belongs to the EPSP synthase family. MurA subfamily.

It localises to the cytoplasm. The enzyme catalyses phosphoenolpyruvate + UDP-N-acetyl-alpha-D-glucosamine = UDP-N-acetyl-3-O-(1-carboxyvinyl)-alpha-D-glucosamine + phosphate. Its pathway is cell wall biogenesis; peptidoglycan biosynthesis. Functionally, cell wall formation. Adds enolpyruvyl to UDP-N-acetylglucosamine. The protein is UDP-N-acetylglucosamine 1-carboxyvinyltransferase of Treponema pallidum (strain Nichols).